Consider the following 90-residue polypeptide: DNA-binding protein HRm (90 aa).

It belongs to the bacterial histone-like protein family.

In terms of biological role, histone-like DNA-binding protein which is capable of wrapping DNA to stabilize it, and thus to prevent its denaturation under extreme environmental conditions. This chain is DNA-binding protein HRm (hupB), found in Rhizobium meliloti (strain 1021) (Ensifer meliloti).